A 542-amino-acid polypeptide reads, in one-letter code: Chaperonin GroEL 2 (542 aa).

Residues T29–P32, D86–T90, G413, N477–A479, and D493 contribute to the ATP site.

It belongs to the chaperonin (HSP60) family. In terms of assembly, forms a cylinder of 14 subunits composed of two heptameric rings stacked back-to-back. Interacts with the co-chaperonin GroES.

The protein resides in the cytoplasm. It carries out the reaction ATP + H2O + a folded polypeptide = ADP + phosphate + an unfolded polypeptide.. Its function is as follows. Together with its co-chaperonin GroES, plays an essential role in assisting protein folding. The GroEL-GroES system forms a nano-cage that allows encapsulation of the non-native substrate proteins and provides a physical environment optimized to promote and accelerate protein folding. This Frankia alni (strain DSM 45986 / CECT 9034 / ACN14a) protein is Chaperonin GroEL 2.